Consider the following 66-residue polypeptide: DNA-directed RNA polymerase subunit Rpo10 (66 aa).

Zn(2+) contacts are provided by cysteine 7, cysteine 10, cysteine 44, and cysteine 45.

The protein belongs to the archaeal Rpo10/eukaryotic RPB10 RNA polymerase subunit family. As to quaternary structure, part of the RNA polymerase complex. Zn(2+) is required as a cofactor.

Its subcellular location is the cytoplasm. It catalyses the reaction RNA(n) + a ribonucleoside 5'-triphosphate = RNA(n+1) + diphosphate. DNA-dependent RNA polymerase (RNAP) catalyzes the transcription of DNA into RNA using the four ribonucleoside triphosphates as substrates. In Pyrobaculum islandicum (strain DSM 4184 / JCM 9189 / GEO3), this protein is DNA-directed RNA polymerase subunit Rpo10.